A 196-amino-acid polypeptide reads, in one-letter code: Large ribosomal subunit protein eL15 (196 aa).

Residues 153–196 (DPSSRGRATRGKTSAGRKGRGMATRGKGTEKTRPSIRAYKSRGK) are disordered. Residues 159-172 (RATRGKTSAGRKGR) show a composition bias toward basic residues.

It belongs to the eukaryotic ribosomal protein eL15 family.

The protein is Large ribosomal subunit protein eL15 of Methanosarcina acetivorans (strain ATCC 35395 / DSM 2834 / JCM 12185 / C2A).